Consider the following 148-residue polypeptide: MKTLLVLALLLLSVSVQAKVYDRCEFARILKKSGMDGYRGVSLANWVCLAKWESNFNTKATNYNPGSQSTDYGIFQINSRYWCNDGKTPKAVNACHISCKVLLDDDLSQDIECAKRVVRDPQGIKAWVAWKAHCQNKDVSQYIRGCKL.

The first 18 residues, 1-18, serve as a signal peptide directing secretion; the sequence is MKTLLVLALLLLSVSVQA. One can recognise a C-type lysozyme domain in the interval 19–148; sequence KVYDRCEFAR…VSQYIRGCKL (130 aa). Intrachain disulfides connect Cys-24–Cys-146, Cys-48–Cys-134, Cys-83–Cys-99, and Cys-95–Cys-113. Active-site residues include Glu-53 and Asp-71.

This sequence belongs to the glycosyl hydrolase 22 family. As to quaternary structure, monomer.

It is found in the secreted. It carries out the reaction Hydrolysis of (1-&gt;4)-beta-linkages between N-acetylmuramic acid and N-acetyl-D-glucosamine residues in a peptidoglycan and between N-acetyl-D-glucosamine residues in chitodextrins.. Functionally, lysozymes have primarily a bacteriolytic function; those in tissues and body fluids are associated with the monocyte-macrophage system and enhance the activity of immunoagents. The chain is Lysozyme C-3 from Sus scrofa (Pig).